A 659-amino-acid polypeptide reads, in one-letter code: DNA ligase (659 aa).

NAD(+) contacts are provided by residues 31-35 (DFVYD), 80-81 (SL), and E109. Catalysis depends on K111, which acts as the N6-AMP-lysine intermediate. The NAD(+) site is built by R132, E166, K281, and K305. Residues C398, C401, C416, and C421 each contribute to the Zn(2+) site. A BRCT domain is found at 581-659 (VTTHPFNGKT…EATFKVKINE (79 aa)).

Belongs to the NAD-dependent DNA ligase family. LigA subfamily. The cofactor is Mg(2+). It depends on Mn(2+) as a cofactor.

It catalyses the reaction NAD(+) + (deoxyribonucleotide)n-3'-hydroxyl + 5'-phospho-(deoxyribonucleotide)m = (deoxyribonucleotide)n+m + AMP + beta-nicotinamide D-nucleotide.. Functionally, DNA ligase that catalyzes the formation of phosphodiester linkages between 5'-phosphoryl and 3'-hydroxyl groups in double-stranded DNA using NAD as a coenzyme and as the energy source for the reaction. It is essential for DNA replication and repair of damaged DNA. In Acholeplasma laidlawii (strain PG-8A), this protein is DNA ligase.